The chain runs to 427 residues: Peptidase B (427 aa).

Lys195 and Asp200 together coordinate Mn(2+). Lys207 is an active-site residue. Mn(2+) is bound by residues Asp218, Asp277, and Glu279. Arg281 is a catalytic residue.

Belongs to the peptidase M17 family. As to quaternary structure, homohexamer. Mn(2+) is required as a cofactor.

Its subcellular location is the cytoplasm. It carries out the reaction Release of an N-terminal amino acid, Xaa, from a peptide or arylamide. Xaa is preferably Glu or Asp but may be other amino acids, including Leu, Met, His, Cys and Gln.. Probably plays an important role in intracellular peptide degradation. In Escherichia coli (strain K12 / MC4100 / BW2952), this protein is Peptidase B.